Consider the following 436-residue polypeptide: GTPase Der (436 aa).

2 consecutive EngA-type G domains span residues 4–167 (PVIA…PTDL) and 175–351 (IKFS…ENQN). GTP-binding positions include 10–17 (GRPNVGKS), 57–61 (DTGGI), 119–122 (NKAD), 181–188 (GRPNVGKS), 229–233 (DTAGI), and 294–297 (NKWD). The region spanning 352 to 436 (RRIQSALLND…PIHLIPRQRK (85 aa)) is the KH-like domain.

This sequence belongs to the TRAFAC class TrmE-Era-EngA-EngB-Septin-like GTPase superfamily. EngA (Der) GTPase family. Associates with the 50S ribosomal subunit.

GTPase that plays an essential role in the late steps of ribosome biogenesis. The sequence is that of GTPase Der from Latilactobacillus sakei subsp. sakei (strain 23K) (Lactobacillus sakei subsp. sakei).